The sequence spans 569 residues: Urease subunit alpha (569 aa).

One can recognise a Urease domain in the interval 131–569; it reads GGFDAHIHFI…LPLAQRYFMY (439 aa). Positions 136, 138, and 219 each coordinate Ni(2+). Position 219 is an N6-carboxylysine (K219). A substrate-binding site is contributed by H221. The Ni(2+) site is built by H248 and H274. Catalysis depends on H322, which acts as the Proton donor. D362 serves as a coordination point for Ni(2+).

The protein belongs to the metallo-dependent hydrolases superfamily. Urease alpha subunit family. In terms of assembly, heterotrimer of UreA (gamma), UreB (beta) and UreC (alpha) subunits. Three heterotrimers associate to form the active enzyme. The cofactor is Ni cation. Carboxylation allows a single lysine to coordinate two nickel ions.

The protein resides in the cytoplasm. It carries out the reaction urea + 2 H2O + H(+) = hydrogencarbonate + 2 NH4(+). The protein operates within nitrogen metabolism; urea degradation; CO(2) and NH(3) from urea (urease route): step 1/1. This Jannaschia sp. (strain CCS1) protein is Urease subunit alpha.